A 1488-amino-acid polypeptide reads, in one-letter code: Chromosome partition protein MukB (1488 aa).

34–41 is a binding site for ATP; the sequence is GGNGAGKS. Coiled-coil stretches lie at residues 326 to 418, 444 to 472, and 509 to 602; these read LEAD…QYNQ, LDTFQAKEQEATEKLLSLEQKMSVAQTAH, and RHLA…RRAP. The segment at 666-783 is flexible hinge; sequence PGGAEDQRLN…SLPIFGRAAR (118 aa). Coiled-coil stretches lie at residues 835–923, 977–1116, and 1209–1265; these read EAEI…AKLE, EMLS…AKAG, and VEAI…LQSV. The tract at residues 1049-1074 is disordered; sequence ADSGAEERARQRRDELHAQLSNNRSR. Positions 1051-1065 are enriched in basic and acidic residues; that stretch reads SGAEERARQRRDELH.

The protein belongs to the SMC family. MukB subfamily. In terms of assembly, homodimerization via its hinge domain. Binds to DNA via its C-terminal region. Interacts, and probably forms a ternary complex, with MukE and MukF via its C-terminal region. The complex formation is stimulated by calcium or magnesium. Interacts with tubulin-related protein FtsZ.

Its subcellular location is the cytoplasm. The protein localises to the nucleoid. Plays a central role in chromosome condensation, segregation and cell cycle progression. Functions as a homodimer, which is essential for chromosome partition. Involved in negative DNA supercoiling in vivo, and by this means organize and compact chromosomes. May achieve or facilitate chromosome segregation by condensation DNA from both sides of a centrally located replisome during cell division. This Salmonella heidelberg (strain SL476) protein is Chromosome partition protein MukB.